A 343-amino-acid polypeptide reads, in one-letter code: Major capsid protein VP1 (343 aa).

The protein belongs to the polyomaviruses coat protein VP1 family. As to quaternary structure, homomultimer; disulfide-linked. The virus capsid is composed of 72 icosahedral units, each one composed of five disulfide-linked copies of VP1. Interacts with minor capsid proteins VP2 and VP3.

It localises to the virion. It is found in the host nucleus. Functionally, forms an icosahedral capsid with a T=7 symmetry and a 46-48 nm diameter. The capsid is composed of 72 pentamers linked to each other by disulfide bonds and associated with VP2 or VP3 proteins. Interacts with sialic acids on the cell surface to provide virion attachment to target cell. Once attached, the virion is internalized by endocytosis and traffics to the endoplasmic reticulum. Inside the endoplasmic reticulum, the protein folding machinery isomerizes VP1 interpentamer disulfide bonds, thereby triggering initial uncoating. Next, the virion uses the endoplasmic reticulum-associated degradation machinery to probably translocate in the cytosol before reaching the nucleus. Nuclear entry of the viral DNA involves the selective exposure and importin recognition of VP2/Vp3 nuclear localization signal. In late phase of infection, neo-synthesized VP1 encapsulates replicated genomic DNA in the nucleus, and participates in rearranging nucleosomes around the viral DNA. In Psittacidae (parrots), this protein is Major capsid protein VP1.